Consider the following 346-residue polypeptide: Protein Spea_1705 (346 aa).

Cys101 acts as the Proton acceptor in catalysis. Substrate contacts are provided by residues 102–103, Asp262, and 267–268; these read GH and GT.

This sequence belongs to the proline racemase family.

The catalysed reaction is trans-3-hydroxy-L-proline = 1-pyrroline-2-carboxylate + H2O. In vitro, catalyzes the dehydration of trans-3-hydroxy-L-proline (t3LHyp) to Delta(1)-pyrroline-2-carboxylate (Pyr2C), albeit with very low efficiency. The physiological substrate may be different. Displays neither trans-4-hydroxy-L-proline (t4LHyp) epimerase nor proline racemase activity. The chain is Protein Spea_1705 from Shewanella pealeana (strain ATCC 700345 / ANG-SQ1).